A 998-amino-acid polypeptide reads, in one-letter code: Methyl sulfide methyltransferase-associated sensor (998 aa).

The 38-residue stretch at 40-77 folds into the PAS 1 domain; the sequence is FGYSPKDFISGGLGYADIIYPADLEIAVSQFFSYVEKD. The PAC 1 domain maps to 117-169; it reads FTQQYRLLNKSGDVLWVEAEIKVLEEEEGKAGLFQVTVFDISRWKHTEKAMPA. One can recognise a PAS 2 domain in the interval 209–246; sequence LGYTPEDFTSGRIVYTDIIHPDDLDNVRAEVSKNTEEG. The 53-residue stretch at 250 to 302 folds into the PAC 2 domain; that stretch reads FSKEYRVLAKSGEVRYVDERTLIRRNEKGEITCYQGILLDITQRKEAEELILS. The GAF 1 domain occupies 314–458; that stretch reads ASLDEVLLLL…NAYLAGIAIE (145 aa). A PAS 3 domain is found at 469–540; sequence SENRFRTIFD…ENMQKIKAEG (72 aa). The 144-residue stretch at 609–752 folds into the GAF 2 domain; it reads ASLKEITDFA…LMQGMWQLIQ (144 aa). Residue Cys656 coordinates heme. The Histidine kinase domain maps to 783–998; it reads EFVEEMMFPE…GNLMHVKLPK (216 aa).

Heme serves as cofactor. Autophosphorylates: autophosphorylation is dependent on the redox state of heme cofactor and is promoted upon reduction.

The protein resides in the cytoplasm. The enzyme catalyses ATP + protein L-histidine = ADP + protein N-phospho-L-histidine.. Functionally, heme-binding sensor kinase component part of a two-component regulatory system involved in methyl sulfide metabolism. Does not act as a phytochrome-like photoreceptor. The polypeptide is Methyl sulfide methyltransferase-associated sensor (msmS) (Methanosarcina acetivorans (strain ATCC 35395 / DSM 2834 / JCM 12185 / C2A)).